The sequence spans 134 residues: Small ribosomal subunit protein uS12 (134 aa).

Position 89 is a 3-methylthioaspartic acid (aspartate 89). The disordered stretch occupies residues 103-134 (DTAGVKDRKQGRSKYGAKRPKPGEAAATGKKK). Over residues 113-122 (GRSKYGAKRP) the composition is skewed to basic residues.

It belongs to the universal ribosomal protein uS12 family. Part of the 30S ribosomal subunit. Contacts proteins S8 and S17. May interact with IF1 in the 30S initiation complex.

With S4 and S5 plays an important role in translational accuracy. Functionally, interacts with and stabilizes bases of the 16S rRNA that are involved in tRNA selection in the A site and with the mRNA backbone. Located at the interface of the 30S and 50S subunits, it traverses the body of the 30S subunit contacting proteins on the other side and probably holding the rRNA structure together. The combined cluster of proteins S8, S12 and S17 appears to hold together the shoulder and platform of the 30S subunit. The protein is Small ribosomal subunit protein uS12 of Thermosynechococcus vestitus (strain NIES-2133 / IAM M-273 / BP-1).